The chain runs to 50 residues: Sperm protamine P1 (50 aa).

This sequence belongs to the protamine P1 family. In terms of tissue distribution, testis.

The protein resides in the nucleus. It localises to the chromosome. Protamines substitute for histones in the chromatin of sperm during the haploid phase of spermatogenesis. They compact sperm DNA into a highly condensed, stable and inactive complex. The protein is Sperm protamine P1 (PRM1) of Natalus stramineus (Mexican funnel-eared bat).